A 294-amino-acid polypeptide reads, in one-letter code: Eukaryotic translation initiation factor 3 subunit F (294 aa).

Residues 20-163 (VTVTAQALFQ…IDPSKNSGNC (144 aa)) form the MPN domain.

Belongs to the eIF-3 subunit F family. In terms of assembly, component of the eukaryotic translation initiation factor 3 (eIF-3) complex.

The protein localises to the cytoplasm. Component of the eukaryotic translation initiation factor 3 (eIF-3) complex, which is involved in protein synthesis of a specialized repertoire of mRNAs and, together with other initiation factors, stimulates binding of mRNA and methionyl-tRNAi to the 40S ribosome. The eIF-3 complex specifically targets and initiates translation of a subset of mRNAs involved in cell proliferation. This Yarrowia lipolytica (strain CLIB 122 / E 150) (Yeast) protein is Eukaryotic translation initiation factor 3 subunit F.